Here is a 275-residue protein sequence, read N- to C-terminus: Trypsin-3 (275 aa).

The N-terminal stretch at 1–22 (MISNKIAILLAVLVVAVACAQA) is a signal peptide. Residues 23 to 48 (RVALKHRSVQALPRFLPRPKYDVGHR) constitute a propeptide, activation peptide. In terms of domain architecture, Peptidase S1 spans 49 to 274 (IVGGFEIDVS…VRDWVRENSG (226 aa)). A disulfide bridge connects residues cysteine 74 and cysteine 90. Residues histidine 89 and aspartate 134 each act as charge relay system in the active site. Cystine bridges form between cysteine 199/cysteine 215 and cysteine 226/cysteine 250. Catalysis depends on serine 230, which acts as the Charge relay system.

This sequence belongs to the peptidase S1 family. As to expression, expressed in the midgut. Expression levels drop a few hours after blood feeding and pick up again 28 hours later.

It localises to the secreted. The catalysed reaction is Preferential cleavage: Arg-|-Xaa, Lys-|-Xaa.. Constitutive trypsin that is expressed 2 days after emergence, coinciding with host seeking behavior of the female. In Anopheles gambiae (African malaria mosquito), this protein is Trypsin-3 (TRYP3).